A 397-amino-acid polypeptide reads, in one-letter code: Acetate kinase (397 aa).

Asn-8 lines the Mg(2+) pocket. An ATP-binding site is contributed by Lys-15. Arg-89 is a binding site for substrate. Asp-146 serves as the catalytic Proton donor/acceptor. ATP contacts are provided by residues 206–210, 281–283, and 329–333; these read HLGNG, DLR, and GIGEN. Glu-382 is a binding site for Mg(2+).

This sequence belongs to the acetokinase family. As to quaternary structure, homodimer. The cofactor is Mg(2+). Mn(2+) serves as cofactor.

The protein localises to the cytoplasm. The catalysed reaction is acetate + ATP = acetyl phosphate + ADP. It participates in metabolic intermediate biosynthesis; acetyl-CoA biosynthesis; acetyl-CoA from acetate: step 1/2. In terms of biological role, catalyzes the formation of acetyl phosphate from acetate and ATP. Can also catalyze the reverse reaction. This is Acetate kinase from Geobacillus sp. (strain WCH70).